Reading from the N-terminus, the 315-residue chain is MRIALAGAGAFGEKHLDGLKNIDGVEIVSIISRKAEQAAEVAAKYGAKHSGTDLSEALARDDVDAVILCTPTQMHAEQAIACMNAGKHVQVEIPLADSWADAEAVMKKSQETGLVCMVGHTRRFNPSHQYIHNKIVAGELAIQQMDVQTYFFRRKNMNAKGEPRSWTDHLLWHHAAHTVDLFAYQAGKIVQANAVQGPIHPELGIAMDMSIQLKSETGAICTLSLSFNNDGPLGTFFRYICDNGTWIARYDDLVTGKEEPVDVSKVDVSMNGIELQDREFIAAIREGREPNSSVARVLDCYRVLGELEVQLEKQG.

The protein belongs to the Gfo/Idh/MocA family. Homodimer.

It catalyses the reaction 4-carboxy-2-hydroxymuconate semialdehyde hemiacetal + NADP(+) = 2-oxo-2H-pyran-4,6-dicarboxylate + NADPH + H(+). It participates in secondary metabolite metabolism; lignin degradation. Its activity is regulated as follows. Inhibited by p-chloromercuribenzoate (10 mM), HgCl2 (10 mM), or 5,5-dithiobis(2-nitrobenzoate) (100 mM). Involved in the degradation of protocatechuate (PCA) via the PCA 4,5-cleavage pathway. Catalyzes the oxidation of the hemiacetal form of 4-carboxy-2-hydroxymuconate-6-semialdehyde (CHMS) to produce 2-pyrone-4,6-dicarboxylate (PDC). LigC has 10-times-higher affinity to NADP than to NAD. The sequence is that of 4-carboxy-2-hydroxymuconate-6-semialdehyde dehydrogenase (ligC) from Sphingobium sp. (strain NBRC 103272 / SYK-6).